A 54-amino-acid chain; its full sequence is Large ribosomal subunit protein bL32c (54 aa).

It belongs to the bacterial ribosomal protein bL32 family.

Its subcellular location is the plastid. The protein localises to the chloroplast. The polypeptide is Large ribosomal subunit protein bL32c (Lactuca sativa (Garden lettuce)).